Consider the following 340-residue polypeptide: Probable complex I intermediate-associated protein 30, mitochondrial (340 aa).

This sequence belongs to the CIA30 family.

The protein localises to the mitochondrion. Functionally, chaperone protein involved in the assembly of the mitochondrial NADH:ubiquinone oxidoreductase complex (complex I). Required for normal growth and reproduction. The chain is Probable complex I intermediate-associated protein 30, mitochondrial (nuaf-1) from Caenorhabditis briggsae.